The sequence spans 340 residues: MYRNWRDLISPKKLQVESESLTNTYGKFFAEPFERGFGTTLGNSLRRVLLSSLQGAAISSVKIKGVLHEFSSIPGVTEDVTNIILNLKGVSLKMHGNEARTVRIIHKGDGIVKAGDIVTDANVEILNPDHHIATCSKDANLEMEMVVKLGKGYVPSDRNRDEKAPVGTMPIDAIFSPIKKVNFTVSNARVGQMTDYDKLTLEVWTNGSVVPEDAVAFAAKILKEQLSIFINFDEEAEPAEEAETEEERERVNENLYRSVDELELSVRSANCLKNAGIKMIGELVSRSEAEMLKTQNFGRKSLNEIKDILADMGLTLGMKLDGFPDPEVMRRIRGERKDEE.

The alpha N-terminal domain (alpha-NTD) stretch occupies residues 1 to 233; that stretch reads MYRNWRDLIS…EQLSIFINFD (233 aa). Residues 251-340 are alpha C-terminal domain (alpha-CTD); the sequence is VNENLYRSVD…RIRGERKDEE (90 aa).

This sequence belongs to the RNA polymerase alpha chain family. As to quaternary structure, homodimer. The RNAP catalytic core consists of 2 alpha, 1 beta, 1 beta' and 1 omega subunit. When a sigma factor is associated with the core the holoenzyme is formed, which can initiate transcription.

It carries out the reaction RNA(n) + a ribonucleoside 5'-triphosphate = RNA(n+1) + diphosphate. In terms of biological role, DNA-dependent RNA polymerase catalyzes the transcription of DNA into RNA using the four ribonucleoside triphosphates as substrates. The protein is DNA-directed RNA polymerase subunit alpha of Geobacter metallireducens (strain ATCC 53774 / DSM 7210 / GS-15).